A 654-amino-acid polypeptide reads, in one-letter code: Acetyl-coenzyme A synthetase (654 aa).

Residues 196 to 199 (RGGK) and T316 each bind CoA. Residues 392–394 (GEP), 416–421 (DTWWQT), D507, and R522 contribute to the ATP site. Position 530 (S530) interacts with CoA. R533 contributes to the ATP binding site. 2 residues coordinate Mg(2+): V544 and V549. An N6-acetyllysine modification is found at K619.

It belongs to the ATP-dependent AMP-binding enzyme family. Mg(2+) is required as a cofactor. Post-translationally, acetylated. Deacetylation by the SIR2-homolog deacetylase activates the enzyme.

It catalyses the reaction acetate + ATP + CoA = acetyl-CoA + AMP + diphosphate. Catalyzes the conversion of acetate into acetyl-CoA (AcCoA), an essential intermediate at the junction of anabolic and catabolic pathways. AcsA undergoes a two-step reaction. In the first half reaction, AcsA combines acetate with ATP to form acetyl-adenylate (AcAMP) intermediate. In the second half reaction, it can then transfer the acetyl group from AcAMP to the sulfhydryl group of CoA, forming the product AcCoA. The chain is Acetyl-coenzyme A synthetase from Chromobacterium violaceum (strain ATCC 12472 / DSM 30191 / JCM 1249 / CCUG 213 / NBRC 12614 / NCIMB 9131 / NCTC 9757 / MK).